A 146-amino-acid chain; its full sequence is uncharacterized protein (146 aa).

This is an uncharacterized protein from Orgyia pseudotsugata (Douglas-fir tussock moth).